The sequence spans 622 residues: Chaperone protein HscA homolog (622 aa).

It belongs to the heat shock protein 70 family.

Its function is as follows. Chaperone involved in the maturation of iron-sulfur cluster-containing proteins. Has a low intrinsic ATPase activity which is markedly stimulated by HscB. The protein is Chaperone protein HscA homolog of Acidovorax sp. (strain JS42).